The sequence spans 552 residues: MKEAFVFLLCLTNKFPKKFNSCSKKKETLYVLGLVLLVSFIEAPVTKPNFGKFIECLRDRTTPENPITDVISIADNSTTFLSSYVSYTKNKRFSSPNFKKLLAIIAAKHVSHVQATVVCAKSNGIQLRIRSGGHDNEGFSYMSSVPFVILDMHNLRSIDVNLSRKNAWVQAGATLGELYVKINEASQTLAFPAGVCPTVGAGGHISGGGFGNLMRKFGITVDHVIDAQIIDVNGKLLNRAAMGEDLFWAIRGGGSSFGVILSWKINLVEVPKILTVFKVNKTLEQGGTDILYKWQLVANKLPDSLFITAWPRTVNGPKPGERTVAVVFYAQFLGPTDKLMEIMDQSFPELGLGREDCHEMSWLNTTLFWANYPAGTPKSILLDRPPTNSVSFKSKSDFVKKPIPKKGLEKLWKTMFKFNSSVSLQFNPYGGVMDRIPATATAFPHRKGNLFKVQYSTMWFDANATESSLAMMNELFEVAEPYVSSNPREAFFNFRDIDIGSNPSGETNVDEAKIYGSKYFLGNLKRLMDVKAKYDPDNFFKNEQSIPPVRVK.

An N-terminal signal peptide occupies residues 1 to 16 (MKEAFVFLLCLTNKFP). Cysteines 56 and 119 form a disulfide. N-linked (GlcNAc...) asparagine glycosylation is found at N76, N161, N280, N364, N419, and N463. Positions 93–270 (FSSPNFKKLL…LSWKINLVEV (178 aa)) constitute an FAD-binding PCMH-type domain. The 6-(S-cysteinyl)-8alpha-(pros-histidyl)-FAD (His-Cys) cross-link spans 134-196 (HDNEGFSYMS…QTLAFPAGVC (63 aa)).

The protein belongs to the oxygen-dependent FAD-linked oxidoreductase family. The cofactor is FAD. The FAD cofactor is bound via a bicovalent 6-S-cysteinyl, 8alpha-N1-histidyl FAD linkage.

It localises to the secreted. The protein localises to the cell wall. Probable flavin-dependent oxidoreductase. This is Berberine bridge enzyme-like 6 from Arabidopsis thaliana (Mouse-ear cress).